The chain runs to 295 residues: Light-independent protochlorophyllide reductase iron-sulfur ATP-binding protein (295 aa).

ATP is bound by residues 39–44 and Lys-68; that span reads GIGKST. Residue Ser-43 participates in Mg(2+) binding. [4Fe-4S] cluster-binding residues include Cys-124 and Cys-158. Residues 209 to 210 and 233 to 235 contribute to the ATP site; these read NR and PDL.

This sequence belongs to the NifH/BchL/ChlL family. Homodimer. Protochlorophyllide reductase is composed of three subunits; BchL, BchN and BchB. [4Fe-4S] cluster serves as cofactor.

It catalyses the reaction chlorophyllide a + oxidized 2[4Fe-4S]-[ferredoxin] + 2 ADP + 2 phosphate = protochlorophyllide a + reduced 2[4Fe-4S]-[ferredoxin] + 2 ATP + 2 H2O. Its pathway is porphyrin-containing compound metabolism; bacteriochlorophyll biosynthesis (light-independent). Its function is as follows. Component of the dark-operative protochlorophyllide reductase (DPOR) that uses Mg-ATP and reduced ferredoxin to reduce ring D of protochlorophyllide (Pchlide) to form chlorophyllide a (Chlide). This reaction is light-independent. The L component serves as a unique electron donor to the NB-component of the complex, and binds Mg-ATP. In Rhodospirillum rubrum (strain ATCC 11170 / ATH 1.1.1 / DSM 467 / LMG 4362 / NCIMB 8255 / S1), this protein is Light-independent protochlorophyllide reductase iron-sulfur ATP-binding protein.